The chain runs to 448 residues: Pentatricopeptide repeat-containing protein At1g80550, mitochondrial (448 aa).

A mitochondrion-targeting transit peptide spans 1-21 (MLLLRRLNRVRIASPYSVRLL). 10 PPR repeats span residues 80-110 (TTETFNRVIDILGKYFEFEISWALINRMIGN), 116-146 (NHVTFRIVFKRYVTAHLVQEAIDAYDKLDDF), 150-186 (DETSFYNLVDALCEHKHVVEAEELCFGKNVIGNGFSV), 188-222 (NTKIHNLILRGWSKLGWWGKCKEYWKKMDTEGVTK), 223-257 (DLFSYSIYMDIMCKSGKPWKAVKLYKEMKSRRMKL), 258-292 (DVVAYNTVIRAIGASQGVEFGIRVFREMRERGCEP), 293-327 (NVATHNTIIKLLCEDGRMRDAYRMLDEMPKRGCQP), 331-359 (TYMCLFSRLEKPSEILSLFGRMIRSGVRP), 360-394 (KMDTYVMLMRKFERWGFLQPVLYVWKTMKESGDTP), and 395-429 (DSAAYNAVIDALIQKGMLDMAREYEEEMIERGLSP).

It belongs to the PPR family. P subfamily.

It localises to the mitochondrion. This chain is Pentatricopeptide repeat-containing protein At1g80550, mitochondrial, found in Arabidopsis thaliana (Mouse-ear cress).